The sequence spans 354 residues: Homeobox-leucine zipper protein HOX27 (354 aa).

The segment at 98–175 (SVAAGAPGME…DDEGASARKK (78 aa)) is disordered. Over residues 148 to 157 (QGGGGGGGGE) the composition is skewed to gly residues. Residues 171–230 (SARKKLRLSKEQSAFLEESFKEHSTLNPKQKVALAKQLNLRPRQVEVWFQNRRARTKLKQ) constitute a DNA-binding region (homeobox). The interval 229 to 273 (KQTEVDCEYLKRCCETLTEENRRLHKELAELRALKTARPFYMHLP) is leucine-zipper. Positions 294–323 (STSAPAAATSPAAAPTAAARTAVASPEPHR) are disordered.

This sequence belongs to the HD-ZIP homeobox family. Class II subfamily. As to expression, expressed in seedlings, roots, stems, leaf sheaths and blades and panicles.

The protein localises to the nucleus. Probable transcription factor. The protein is Homeobox-leucine zipper protein HOX27 (HOX27) of Oryza sativa subsp. japonica (Rice).